We begin with the raw amino-acid sequence, 277 residues long: Orotidine 5'-phosphate decarboxylase (277 aa).

Substrate-binding positions include Asp-40, 62–64 (KTH), 93–102 (DRKFIDIGNT), Tyr-229, and Arg-247. Lys-95 functions as the Proton donor in the catalytic mechanism.

This sequence belongs to the OMP decarboxylase family.

The enzyme catalyses orotidine 5'-phosphate + H(+) = UMP + CO2. Its pathway is pyrimidine metabolism; UMP biosynthesis via de novo pathway; UMP from orotate: step 2/2. In Aspergillus oryzae (strain ATCC 42149 / RIB 40) (Yellow koji mold), this protein is Orotidine 5'-phosphate decarboxylase (pyrG).